We begin with the raw amino-acid sequence, 413 residues long: Acyltransferase mokF (413 aa).

Arginine 93 provides a ligand contact to monacolin J. Serine 96 functions as the Acyl-ester intermediate in the catalytic mechanism. 3 residues coordinate monacolin J: arginine 193, tyrosine 208, and tyrosine 278. Glycine 386 contributes to the 2-methylbutanoate binding site.

It belongs to the class-A beta-lactamase family.

It catalyses the reaction monacolin J carboxylate + (S)-2-methylbutanoyl-[2-methylbutanoate polyketide synthase] = lovastatin carboxylate + holo-[2-methylbutanoate polyketide synthase]. The protein operates within polyketide biosynthesis; lovastatin biosynthesis. Its function is as follows. Acyltransferase; part of the gene cluster that mediates the biosynthesis of monakolin K, also known as lovastatin, and which acts as a potent competitive inhibitor of HMG-CoA reductase. Monakolin K biosynthesis is performed in two stages. The first stage is catalyzed by the nonaketide synthase mokA, which belongs to type I polyketide synthases and catalyzes the iterative nine-step formation of the polyketide. This PKS stage is completed by the action of dehydrogenase mokE, which catalyzes the NADPH-dependent reduction of the unsaturated tetra-, penta- and heptaketide intermediates that arise during the mokA-mediated biosynthesis of the nonaketide chain and leads to dihydromonacolin L. Covalently bound dihydromonacolin L is released from mokA by the mokD esterase. Conversion of dihydromonacolin L into monacolin L and then monacolin J is subsequently performed with the participation of molecular oxygen and P450 monoogygenase mokC. Finally, mokF performs the conversion of monacoline J to monacoline K through the addition of the side-chain diketide moiety (2R)-2-methylbutanoate produced by the diketide synthase mokB. This Monascus pilosus (Red mold) protein is Acyltransferase mokF.